A 147-amino-acid polypeptide reads, in one-letter code: Small ribosomal subunit protein uS12 (147 aa).

It belongs to the universal ribosomal protein uS12 family. In terms of assembly, part of the 30S ribosomal subunit.

Functionally, with S4 and S5 plays an important role in translational accuracy. Located at the interface of the 30S and 50S subunits. This is Small ribosomal subunit protein uS12 from Pyrobaculum calidifontis (strain DSM 21063 / JCM 11548 / VA1).